Consider the following 1490-residue polypeptide: Leucine-rich repeat-containing protein 7 (1490 aa).

LRR repeat units lie at residues 23-44 (IISV…VFNF), 47-68 (TLEE…LFNC), 70-91 (ALRK…IASL), 93-114 (NLKE…IKCC), 116-137 (CLTI…FTQL), 139-161 (NLTQ…GRLV), 162-183 (KLRI…MHKL), 185-206 (QLER…LDQI), 208-229 (NLRE…IGKL), 231-253 (MLVY…SGCE), 254-275 (ALED…IGLL), 277-298 (KLTT…IGNL), 300-321 (LLEE…IGYL), 323-344 (SLRT…IGSC), 346-367 (NVTV…IGQM), 369-391 (RLRV…TKLK), and 392-413 (ELAA…QTEA). 3 positions are modified to phosphoserine: Ser-439, Ser-441, and Ser-443. Positions 663 to 676 (KKESTDESEVDKTH) are enriched in basic and acidic residues. 3 disordered regions span residues 663–709 (KKES…VGSL), 775–808 (DNTG…HGRR), and 822–899 (ELEQ…YHDP). Over residues 677–686 (CLNNSVSSGT) the composition is skewed to polar residues. The span at 687–700 (YSDYSPSQASSASS) shows a compositional bias: low complexity. The span at 787–799 (ENANNNPLLSSKA) shows a compositional bias: polar residues. Thr-831 is subject to Phosphothreonine. Position 850 is a phosphoserine (Ser-850). Residues 859–871 (PSKLETTPTTSPL) show a composition bias toward low complexity. A Phosphothreonine modification is found at Thr-865. At Ser-869 the chain carries Phosphoserine. Basic and acidic residues predominate over residues 872–882 (PERKDHMKEPT). Residues Ser-947, Ser-949, and Ser-1118 each carry the phosphoserine modification. Arg-1149 is subject to Omega-N-methylarginine. Residues 1194–1217 (LTQRRPLSARSYSTESYGASQTRP) are compositionally biased toward polar residues. The interval 1194–1218 (LTQRRPLSARSYSTESYGASQTRPV) is disordered. At Ser-1233 the chain carries Phosphoserine. Disordered regions lie at residues 1238–1265 (GNYG…SCGK) and 1282–1312 (RLDR…PYPL). The segment covering 1243-1263 (KTSDNSDIKTRPTPVKGEESC) has biased composition (basic and acidic residues). Polar residues predominate over residues 1286–1307 (TPSQQSNILDNGQEDVSPSGQW). A phosphoserine mark is found at Ser-1288 and Ser-1392. Residues 1398–1488 (EQFCVRIEKN…TVDLVIQREL (91 aa)) form the PDZ domain.

The protein belongs to the LAP (LRR and PDZ) protein family. In terms of assembly, interacts with CNKSR2 and DLG4. Interacts with CTNND2/Catenin delta-2. Forms a complex with N-cadherin through CTNND2. Interacts with CAMK2A. In terms of processing, O-glycosylated and phosphorylated. As to expression, brain-specific. Highly concentrated at synapses.

It localises to the cytoplasm. It is found in the postsynaptic density. Its function is as follows. Required for normal synaptic spine architecture and function. Necessary for DISC1 and GRM5 localization to postsynaptic density complexes and for both N-methyl D-aspartate receptor-dependent and metabotropic glutamate receptor-dependent long term depression. The sequence is that of Leucine-rich repeat-containing protein 7 (Lrrc7) from Rattus norvegicus (Rat).